Consider the following 123-residue polypeptide: Defensin beta 118 (123 aa).

The signal sequence occupies residues 1-19 (MKLLLLALPMLVLLPQVIP). Intrachain disulfides connect C27/C54, C34/C48, and C38/C55. 2 disordered regions span residues 59–79 (NEDH…STPG) and 102–123 (MVEE…HHSS). A propeptide spanning residues 64-123 (QVPTTSPTPLSDSTPGSIDDILTVRFTTDYFEVSSKKDMVEESEAGWGTQTSLPDVHHSS) is cleaved from the precursor. Low complexity predominate over residues 66–79 (PTTSPTPLSDSTPG).

It belongs to the beta-defensin family. The three-dimensional structure formed by the three intramolecular disulfide bridges is indispensable for antimicrobial activity.

The protein resides in the secreted. Functionally, host defense peptide that exhibits antimicrobial activity against both Gram-negative bacteria, such as E.coli and S.typhimurium, and Gram-positive bacteria, such as S.aureus and B.subtilis. Inhibits cell adhesion of E.coli on intestinal epithelial enterocytes. Causes rapid permeabilization of both the outer and inner membrane of E.coli, leading to morphological alterations on the bacterial surface. Binds to bacterial lipopolysaccharides (LPS) with high affinity, and may thereby be involved in immunoregulation through LPS neutralization. May contribute to epididymal innate immunity and protect the sperm against attack by microorganisms. The chain is Defensin beta 118 (DEFB118) from Hylobates lar (Lar gibbon).